The following is a 149-amino-acid chain: Probable cyclic pyranopterin monophosphate synthase (149 aa).

Substrate contacts are provided by residues 67-69 (LCH) and 103-104 (ME). Residue Asp-118 is part of the active site.

The protein belongs to the MoaC family. As to quaternary structure, homohexamer; trimer of dimers.

The catalysed reaction is (8S)-3',8-cyclo-7,8-dihydroguanosine 5'-triphosphate = cyclic pyranopterin phosphate + diphosphate. The protein operates within cofactor biosynthesis; molybdopterin biosynthesis. Its function is as follows. Catalyzes the conversion of (8S)-3',8-cyclo-7,8-dihydroguanosine 5'-triphosphate to cyclic pyranopterin monophosphate (cPMP). This chain is Probable cyclic pyranopterin monophosphate synthase, found in Saccharolobus solfataricus (strain ATCC 35092 / DSM 1617 / JCM 11322 / P2) (Sulfolobus solfataricus).